Here is a 108-residue protein sequence, read N- to C-terminus: Integration host factor subunit alpha (108 aa).

This sequence belongs to the bacterial histone-like protein family. Heterodimer of an alpha and a beta chain.

Its function is as follows. This protein is one of the two subunits of integration host factor, a specific DNA-binding protein that functions in genetic recombination as well as in transcriptional and translational control. This Rhodopseudomonas palustris (strain BisB18) protein is Integration host factor subunit alpha.